We begin with the raw amino-acid sequence, 273 residues long: ABC transporter glutamine-binding protein GlnH (273 aa).

Positions 1-20 are cleaved as a signal peptide; the sequence is MKKIFSLALISLFAVILLAA. Residue C21 is the site of N-palmitoyl cysteine attachment. The S-diacylglycerol cysteine moiety is linked to residue C21.

This sequence belongs to the bacterial solute-binding protein 3 family. As to quaternary structure, the complex is composed of two ATP-binding proteins (GlnQ), two transmembrane proteins (GlnM and GlnP) and a solute-binding protein (GlnH).

The protein resides in the cell membrane. Its function is as follows. Part of the ABC transporter complex GlnHMPQ involved in glutamine transport. In Bacillus subtilis (strain 168), this protein is ABC transporter glutamine-binding protein GlnH (glnH).